The sequence spans 540 residues: Glucose-6-phosphate isomerase (540 aa).

The active-site Proton donor is Glu-350. Active-site residues include His-381 and Lys-503.

Belongs to the GPI family.

The protein localises to the cytoplasm. The catalysed reaction is alpha-D-glucose 6-phosphate = beta-D-fructose 6-phosphate. Its pathway is carbohydrate biosynthesis; gluconeogenesis. It functions in the pathway carbohydrate degradation; glycolysis; D-glyceraldehyde 3-phosphate and glycerone phosphate from D-glucose: step 2/4. Catalyzes the reversible isomerization of glucose-6-phosphate to fructose-6-phosphate. The sequence is that of Glucose-6-phosphate isomerase from Burkholderia pseudomallei (strain 668).